The following is a 788-amino-acid chain: Protein HHLF1 (788 aa).

Disordered regions lie at residues 1-82 (MAQR…NFWH), 366-385 (TGTA…ETEA), and 609-663 (IHKK…SRLP). Residues 16–25 (RGRGAGGPSG) are compositionally biased toward gly residues. Residues 26 to 56 (VGSSPPSSCVPMGAPSTAGTGASAAATTTPG) are compositionally biased toward low complexity. Positions 74-248 (SGNNSNFWHG…HGAGEVVRLY (175 aa)) are RNA-binding. Positions 650–659 (LRRDDEDWKP) are enriched in basic and acidic residues. Residues 671-788 (LDETFWVLGS…IATHYHYNAQ (118 aa)) form an interaction with host EIF2AK2/PKR region.

Belongs to the herpesviridae US22 family. Interacts with host EIF2AK2/PKR; this interaction retains EIF2AK2 to the host nucleus and prevents its activation. Interaction (via N-terminus) with host BECN1; this interaction inhibits host autophagy. Interacts with the viral DNA polymerase accessory subunit UL44. Interacts with host HSPA5.

It localises to the virion. Its subcellular location is the host cytoplasm. The protein resides in the host nucleus. Its function is as follows. Inhibits the establishment of the antiviral state and the integrated stress response (ISR) in the infected cell. Prevents the phosphorylation of the host eukaryotic translation initiation factor eIF-2alpha/EIF2S1 and thus the shutoff of viral and cellular protein synthesis by directly interacting with EIF2AK2/PKR. Prevents stress granule formation in response to eIF-2alpha/EIF2S1 phosphorylation, thereby rescuing viral replication and protein synthesis. Also inhibits host autophagy by interacting with host Beclin-1/BECN1. The sequence is that of Protein HHLF1 (TRS1) from Homo sapiens (Human).